The primary structure comprises 805 residues: Probable exo-1,4-beta-xylosidase xlnD (805 aa).

An N-terminal signal peptide occupies residues 1–17 (MAVAALALLALLPQALG). Asparagine 20, asparagine 115, asparagine 140, asparagine 235, and asparagine 244 each carry an N-linked (GlcNAc...) asparagine glycan. The active site involves aspartate 308. N-linked (GlcNAc...) asparagine glycans are attached at residues asparagine 350, asparagine 383, asparagine 405, asparagine 434, asparagine 445, asparagine 486, asparagine 490, asparagine 622, asparagine 653, asparagine 667, asparagine 689, and asparagine 711.

This sequence belongs to the glycosyl hydrolase 3 family.

Its subcellular location is the secreted. The catalysed reaction is Hydrolysis of (1-&gt;4)-beta-D-xylans, to remove successive D-xylose residues from the non-reducing termini.. Its pathway is glycan degradation; xylan degradation. Its function is as follows. Xylan 1,4-beta-xylosidase involved in the hydrolysis of xylan, a major structural heterogeneous polysaccharide found in plant biomass representing the second most abundant polysaccharide in the biosphere, after cellulose. The chain is Probable exo-1,4-beta-xylosidase xlnD (xlnD) from Aspergillus aculeatus.